A 270-amino-acid polypeptide reads, in one-letter code: Esterase (270 aa).

Catalysis depends on charge relay system residues Ser-127, Asp-216, and His-244.

This sequence belongs to the LovG family.

It functions in the pathway mycotoxin biosynthesis. In terms of biological role, esterase; part of the gene cluster that mediates the biosynthesis of the selective antifungal agent ascochitine, an o-quinone methide that plays a possible protective role against other microbial competitors in nature and is considered to be important for pathogenicity of legume-associated Didymella species. The pathway probably begins with the synthesis of a keto-aldehyde intermediate by the ascochitine non-reducing polyketide synthase pksAC from successive condensations of 4 malonyl-CoA units, presumably with a simple acetyl-CoA starter unit. Release of the keto-aldehyde intermediate is consistent with the presence of the C-terminal reductive release domain. The HR-PKS (orf7) probably makes a diketide starter unit which is passed to the non-reducing polyketide synthase pksAC for further extension, producing ascochital and ascochitine. The aldehyde dehydrogenase (orf1), the 2-oxoglutarate-dependent dioxygenase (orf3) and the dehydrogenase (orf9) are probably involved in subsequent oxidations of methyl groups to the carboxylic acid of the heterocyclic ring. The ascochitine gene cluster also includes a gene encoding a short peptide with a cupin domain (orf2) that is often found in secondary metabolite gene clusters and which function has still to be determined. This chain is Esterase, found in Didymella fabae (Leaf and pod spot disease fungus).